A 620-amino-acid polypeptide reads, in one-letter code: Guanylate-binding protein 3 (620 aa).

The segment at methionine 1–cysteine 304 is GTPase domain (Globular). The GB1/RHD3-type G domain maps to alanine 29 to lysine 271. GTP-binding positions include glycine 39–serine 46, leucine 61–serine 63, and aspartate 91–leucine 95. Coiled-coil stretches lie at residues lysine 375–leucine 411 and aspartate 477–lysine 582.

Belongs to the TRAFAC class dynamin-like GTPase superfamily. GB1/RHD3 GTPase family. GB1 subfamily. In terms of assembly, heterodimer with other family members, including GBP1, GBP2 and GBP5. Dimerization regulates subcellular location. Brain, lung, heart, spleen, kidney, liver and intestine.

It is found in the cytoplasm. It localises to the perinuclear region. The protein resides in the golgi apparatus membrane. The enzyme catalyses GTP + H2O = GDP + phosphate + H(+). Its function is as follows. Interferon (IFN)-inducible GTPase that plays important roles in innate immunity against a diverse range of bacterial, viral and protozoan pathogens. Hydrolyzes GTP very efficiently; GDP rather than GMP is the major reaction product. Following infection, recruited to the pathogen-containing vacuoles or vacuole-escaped bacteria and acts as a positive regulator of inflammasome assembly by promoting the release of inflammasome ligands from bacteria. Acts by promoting lysis of pathogen-containing vacuoles, releasing pathogens into the cytosol. Following pathogen release in the cytosol, promotes recruitment of proteins that mediate bacterial cytolysis, such as Gm12250/Irgb10: this liberates ligands that are detected by inflammasomes, such as lipopolysaccharide (LPS) that activates the non-canonical CASP4/CASP11 inflammasome or double-stranded DNA (dsDNA) that activates the AIM2 inflammasome. May play a role in erythroid differentiation. This chain is Guanylate-binding protein 3, found in Mus musculus (Mouse).